The primary structure comprises 751 residues: Conserved oligomeric Golgi complex subunit 5 (751 aa).

Disordered stretches follow at residues M1 to D21 and S244 to Q263.

It belongs to the COG5 family. In terms of assembly, component of the conserved oligomeric Golgi complex which is composed of eight different subunits and is required for normal Golgi morphology and localization.

Its subcellular location is the golgi apparatus membrane. Functionally, required for normal Golgi function and necessary during spermatogenesis. Required for cleavage furrow ingression during cytokinesis in dividing spermatocytes and for the extensive polarized cell growth that accompanies spermatid elongation. The chain is Conserved oligomeric Golgi complex subunit 5 (fws) from Drosophila melanogaster (Fruit fly).